Reading from the N-terminus, the 525-residue chain is Chromosomal replication initiator protein DnaA (525 aa).

Residues Met-1–Thr-71 form a domain I, interacts with DnaA modulators region. A domain II region spans residues Thr-71 to Ser-188. A disordered region spans residues Ala-160–Asp-182. The segment covering Pro-169–Ala-181 has biased composition (low complexity). Positions Lys-189–Ser-405 are domain III, AAA+ region. Positions 233, 235, 236, and 237 each coordinate ATP. The domain IV, binds dsDNA stretch occupies residues Lys-406–Gly-525.

This sequence belongs to the DnaA family. As to quaternary structure, oligomerizes as a right-handed, spiral filament on DNA at oriC.

Its subcellular location is the cytoplasm. In terms of biological role, plays an essential role in the initiation and regulation of chromosomal replication. ATP-DnaA binds to the origin of replication (oriC) to initiate formation of the DNA replication initiation complex once per cell cycle. Binds the DnaA box (a 9 base pair repeat at the origin) and separates the double-stranded (ds)DNA. Forms a right-handed helical filament on oriC DNA; dsDNA binds to the exterior of the filament while single-stranded (ss)DNA is stabiized in the filament's interior. The ATP-DnaA-oriC complex binds and stabilizes one strand of the AT-rich DNA unwinding element (DUE), permitting loading of DNA polymerase. After initiation quickly degrades to an ADP-DnaA complex that is not apt for DNA replication. Binds acidic phospholipids. The protein is Chromosomal replication initiator protein DnaA of Burkholderia cenocepacia (strain ATCC BAA-245 / DSM 16553 / LMG 16656 / NCTC 13227 / J2315 / CF5610) (Burkholderia cepacia (strain J2315)).